Consider the following 280-residue polypeptide: UPF0494 membrane protein SPAC212.01c (280 aa).

A run of 4 helical transmembrane segments spans residues Trp-107–Val-127, Ile-144–Phe-164, Val-178–Ile-198, and Ala-199–Gly-219.

It belongs to the UPF0494 family.

Its subcellular location is the membrane. The protein is UPF0494 membrane protein SPAC212.01c of Schizosaccharomyces pombe (strain 972 / ATCC 24843) (Fission yeast).